The sequence spans 176 residues: Sec-independent protein translocase protein TatB (176 aa).

The helical transmembrane segment at 1–21 threads the bilayer; it reads MLDLGLSKMALIGVVALVVLG. Positions 155–176 are disordered; the sequence is QSGAARVARHQPASLRRPTRFL.

The protein belongs to the TatB family. In terms of assembly, the Tat system comprises two distinct complexes: a TatABC complex, containing multiple copies of TatA, TatB and TatC subunits, and a separate TatA complex, containing only TatA subunits. Substrates initially bind to the TatABC complex, which probably triggers association of the separate TatA complex to form the active translocon.

The protein resides in the cell inner membrane. In terms of biological role, part of the twin-arginine translocation (Tat) system that transports large folded proteins containing a characteristic twin-arginine motif in their signal peptide across membranes. Together with TatC, TatB is part of a receptor directly interacting with Tat signal peptides. TatB may form an oligomeric binding site that transiently accommodates folded Tat precursor proteins before their translocation. In Burkholderia ambifaria (strain ATCC BAA-244 / DSM 16087 / CCUG 44356 / LMG 19182 / AMMD) (Burkholderia cepacia (strain AMMD)), this protein is Sec-independent protein translocase protein TatB.